The primary structure comprises 840 residues: Phosphatidylglycerol lysyltransferase (840 aa).

Residues 1 to 8 are Cytoplasmic-facing; the sequence is MNQEVKNK. A helical transmembrane segment spans residues 9–29; the sequence is IFSILKITFATALFIFVVITL. Over 30–52 the chain is Extracellular; that stretch reads YRELSGINFKDTLVEFSKINRMS. The chain crosses the membrane as a helical span at residues 53-73; the sequence is LVLLFIGGGASLVILSMYDVI. Topologically, residues 74–89 are cytoplasmic; sequence LSRALKMDISLGKVLR. Residues 90-110 form a helical membrane-spanning segment; that stretch reads VSYIINALNAIVGFGGFIGAG. Residues 111-128 lie on the Extracellular side of the membrane; the sequence is VRAMVYKNYTHDKKKLVH. Residues 129–149 form a helical membrane-spanning segment; sequence FISLILISMLTGLSLLSLLIV. Residues 150-161 lie on the Cytoplasmic side of the membrane; the sequence is FHVFDASLILDK. Residues 162–182 traverse the membrane as a helical segment; that stretch reads ITWVRWVLYVVSFFLPLFIIY. Residues 183–200 lie on the Extracellular side of the membrane; that stretch reads SMVRPPDKNNRFVGLYCT. The helical transmembrane segment at 201-221 threads the bilayer; that stretch reads LVSCVEWLAAAVVLYFCGVIV. At 222 to 229 the chain is on the cytoplasmic side; the sequence is DAHVSFMS. Residues 230–250 traverse the membrane as a helical segment; that stretch reads FIAIFIIAALSGLVSFIPGGF. At 251-271 the chain is on the extracellular side; sequence GAFDLVVLLGFKTLGVPEEKV. A helical membrane pass occupies residues 272–292; that stretch reads LLMLLLYRFAYYFVPVIIALI. Topologically, residues 293-337 are cytoplasmic; that stretch reads LSSFEFGTSAKKYIEGSKYFIPAKDVTSFLMSYQKDIIAKIPSLS. A helical membrane pass occupies residues 338-358; sequence LAILVFFTSMIFFVNNLTIVY. Topologically, residues 359–369 are extracellular; sequence DALYDGNHLTY. A helical membrane pass occupies residues 370 to 390; sequence YILLAIHTSACLLLLLNVVGI. Topologically, residues 391–394 are cytoplasmic; sequence YKQS. Transmembrane regions (helical) follow at residues 395-415 and 416-436; these read RRAI…TFFT and YASY…IVAF. The Cytoplasmic portion of the chain corresponds to 437–450; sequence RRARRLKRPVRMRN. The chain crosses the membrane as a helical span at residues 451 to 471; that stretch reads IVAMLLFSLFILYVNHIFIAG. Residues 472–489 are Extracellular-facing; the sequence is TLYALDIYTIEMHTSVLR. Residues 490–510 form a helical membrane-spanning segment; sequence YYFWLTILIIAIIIGMIAWLF. The Cytoplasmic portion of the chain corresponds to 511 to 840; that stretch reads DYQFSKVRIS…SKVMRVIRHK (330 aa).

The protein belongs to the LPG synthase family.

Its subcellular location is the cell membrane. It catalyses the reaction L-lysyl-tRNA(Lys) + a 1,2-diacyl-sn-glycero-3-phospho-(1'-sn-glycerol) = a 1,2-diacyl-sn-glycero-3-phospho-1'-(3'-O-L-lysyl)-sn-glycerol + tRNA(Lys). Catalyzes the transfer of a lysyl group from L-lysyl-tRNA(Lys) to membrane-bound phosphatidylglycerol (PG), which produces lysylphosphatidylglycerol (LPG), a major component of the bacterial membrane with a positive net charge. LPG synthesis contributes to bacterial virulence as it is involved in the resistance mechanism against cationic antimicrobial peptides (CAMP) produces by the host's immune system (defensins, cathelicidins) and by the competing microorganisms (bacteriocins). In fact, the modification of anionic phosphatidylglycerol with positively charged L-lysine results in repulsion of the peptides. This Staphylococcus aureus (strain MSSA476) protein is Phosphatidylglycerol lysyltransferase (mprF).